Reading from the N-terminus, the 313-residue chain is Beta-ketoacyl-[acyl-carrier-protein] synthase III (313 aa).

Catalysis depends on residues Cys-112 and His-238. The segment at 239-243 (QANIR) is ACP-binding. The active site involves Asn-268.

Belongs to the thiolase-like superfamily. FabH family. In terms of assembly, homodimer.

The protein localises to the cytoplasm. It carries out the reaction malonyl-[ACP] + acetyl-CoA + H(+) = 3-oxobutanoyl-[ACP] + CO2 + CoA. The protein operates within lipid metabolism; fatty acid biosynthesis. Catalyzes the condensation reaction of fatty acid synthesis by the addition to an acyl acceptor of two carbons from malonyl-ACP. Catalyzes the first condensation reaction which initiates fatty acid synthesis and may therefore play a role in governing the total rate of fatty acid production. Possesses both acetoacetyl-ACP synthase and acetyl transacylase activities. Its substrate specificity determines the biosynthesis of branched-chain and/or straight-chain of fatty acids. The chain is Beta-ketoacyl-[acyl-carrier-protein] synthase III from Staphylococcus aureus (strain COL).